Here is a 450-residue protein sequence, read N- to C-terminus: Sorting nexin-4 (450 aa).

Residue Met1 is modified to N-acetylmethionine. Positions 1 to 46 are disordered; sequence MEQAPPDPERQLQPAPLEPLGSPDAVLGAAVGKETEGAGEESSGVD. The residue at position 22 (Ser22) is a Phosphoserine. The region spanning 61–187 is the PX domain; it reads SVSEAEKRTG…YLFLTQEGNW (127 aa). A 1,2-diacyl-sn-glycero-3-phospho-(1D-myo-inositol-3-phosphate)-binding residues include Arg106, Ser108, Lys132, and Arg154.

It belongs to the sorting nexin family. In terms of assembly, heterodimer; heterodimerizes with SNX7 or SNX30. Interacts with WWC1/KIBRA. Identified in a complex with WWC1/KIBRA and dynein components DYNLL1 and DYNC1I2. Interacts with BIN1.

It is found in the early endosome. It localises to the early endosome membrane. In terms of biological role, involved in the regulation of endocytosis and in several stages of intracellular trafficking. Plays a role in recycling endocytosed transferrin receptor and prevent its degradation. Involved in autophagosome assembly by regulating trafficking and recycling of phospholipid scramblase ATG9A. This chain is Sorting nexin-4, found in Pongo abelii (Sumatran orangutan).